A 1357-amino-acid polypeptide reads, in one-letter code: MAYSYTEKKRIRKDFSKLPDVMDVPYLLAIQLDSYREFLQAGASKDHFRDVGLHAAFKSVFPIISYSGNAALEYVGYRLGEPAFDVKECVLRGVTFAVPLRVKVRLIIFDKESSNKAIKDIKEQEVYMGEIPLMTENGTFVINGTERVIVSQLHRSPGVFFDHDRGKTHSSGKLLYSARIIPYRGSWLDFEFDPKDCVFVRIDRRRKLPASVLLRALGYSTEEVLNTFYTTNVFHISGEKLSLELVPQRLRGEVAVMDIHDETGKVIVEQGRRITARHINQLEKAGVKQLDVPMEYVLGRTTAKAIVHPATGEILAECNTEMTTELLIKVAKAQVVRIETLYTNDIDCGPFISDTLKIDTTSNQLEALVEIYRMMRPGEPPTKDAAETLFNNLFFSAERYDLSAVGRMKFNRRIGRTEIEGSGVLSKEDIVEVLKTLVDIRNGKGIVDDIDHLGNRRVRCVGEMAENQFRVGLVRVERAVKERLSMAESEGLMPQDLINAKPVAAAVKEFFGSSQLSQFMDQNNPLSEITHKRRVSALGPGGLTRERAGFEVRDVHPTHYGRVCPIETPEGPNIGLINSLAAYARTNQYGFLESPYRVVKEGVVSDDIVFLSAIEEADHVIAQASAAMNEKKQLIDELVAVRHLNEFTVKAPEDVTLMDVSPKQVVSVAASLIPFLEHDDANRALMGSNMQRQAVPTLRADKPLVGTGMERNVARDSGVCVVARRGGVIDSVDASRIVVRVNDDEVETGEAGVDIYNLTKYTRSNQNTCINQRPLVSKGDKVQRSDIMADGPSTDMGELALGQNMRIAFMAWNGFNFEDSICLSERVVQEDRFTTIHIQELTCVARDTKLGPEEITADIPNVGEAALNKLDEAGIVYVGAEVGAGDILVGKVTPKGETQLTPEEKLLRAIFGEKASDVKDTSLRVPTGTKGTVIDVQVFTRDGVERDSRALAIEKMQLDEIRKDLNEEFRIVEGATFERLRSALNGQVVDGGAGLKKGTVITDEVLDGLEHGQWFKLRMAEDALNEQLEKAQQYIVDRRRLLDDKFEDKKRKLQQGDDLAPGVLKIVKVYLAIRRRIQPGDKMAGRHGNKGVVSVIMPVEDMPHDANGTPVDVVLNPLGVPSRMNVGQILETHLGLAAKGLGEKIDRMLEEQRKAAELRVFLTEVYNEIGGRQENLDEFTDEEILALANNLKKGVPMATPVFDGAKEREIKAMLKLADLPESGQMVLFDGRTGNKFERPVTVGYMYMLKLNHLVDDKMHARSTGSYSLVTQQPLGGKAQFGGQRFGEMEVWALEAYGAAYTLQEMLTVKSDDVNGRTKMYKNIVDGDHRMEPGMPESFNVLIKEIRSLGIDIDLETE.

This sequence belongs to the RNA polymerase beta chain family. The RNAP catalytic core consists of 2 alpha, 1 beta, 1 beta' and 1 omega subunit. When a sigma factor is associated with the core the holoenzyme is formed, which can initiate transcription.

It catalyses the reaction RNA(n) + a ribonucleoside 5'-triphosphate = RNA(n+1) + diphosphate. In terms of biological role, DNA-dependent RNA polymerase catalyzes the transcription of DNA into RNA using the four ribonucleoside triphosphates as substrates. This chain is DNA-directed RNA polymerase subunit beta, found in Pseudomonas putida (strain GB-1).